The chain runs to 611 residues: MPEVVDTCSLASPASVCQTKHLHLRCSIDFTRRVLSGTAALTIQSQEDNLRSLILDTKDLTIEKVVINGQEVKYTLGERQSYKGSPIEISLPIALCKNQEIVIEISFETSPKSSALQWLTPEQTSGKEHPYLFSQCQAIHCRAILPCQDTPSVKLTYSAEVSVPKELVALMSAIRDGEAPDPEDPNRKIYRFSQKVPIPCYLIALVVGALESRQIGPRTLVWSEKEQVEKSAYEFSETESMLKIAEDLGGPYIWGQYDLLVLPPSFPYGGMENPCLTFVTPTLLAGDKSLSNVIAHEISHSWTGNLVTNKTWDHFWLNEGHTVYLERHICGRLFGEKFRHFHALGGWGELQNSIKTFGETHPFTKLVVDLTNTDPDVAYSSVPYEKGFALLFYLEQLLGGPEVFLGFLKAYVEKFSYKSITTDNWKDFLYSHFKDKVDILNQVDWNTWLYSPGLPPVKPNYDMTLTNACISLSQRWITAKDDDLNSFSSADLKDFSSHQVNEFLAQMLQNAPLPLGHIKRMQEVYNFNAINNSEIRFRWLRLCIQSKWEEAIPLALKMATEQGRMKFTRPLFKDLAAFDKSHDQAIRTYKEHKASMHPVTAMLVGKDLKVD.

K73 bears the N6-acetyllysine mark. A peptide is bound by residues 135-137 (QCQ) and 267-272 (PYGGME). H296 contributes to the Zn(2+) binding site. Catalysis depends on E297, which acts as the Proton acceptor. Zn(2+) contacts are provided by H300 and E319. At K337 the chain carries N6-acetyllysine. The active-site Proton donor is Y384. K414 carries the N6-acetyllysine modification. Residue S416 is modified to Phosphoserine. An a peptide-binding site is contributed by 564–566 (RMK). Position 573 is an N6-acetyllysine (K573).

The protein belongs to the peptidase M1 family. As to quaternary structure, monomer. Zn(2+) is required as a cofactor. In terms of processing, phosphorylation at Ser-416 inhibits leukotriene-A4 hydrolase activity. activity.

It localises to the cytoplasm. The enzyme catalyses leukotriene A4 + H2O = leukotriene B4. It carries out the reaction (5S,6S)-epoxy-(18R)-hydroxy-(7E,9E,11Z,14Z,16E)-eicosapentaenoate + H2O = resolvin E1. It catalyses the reaction (5S,6S)-epoxy-(18S)-hydroxy-(7E,9E,11Z,14Z,16E)-eicosapentaenoate + H2O = 18S-resolvin E1. The catalysed reaction is Release of the N-terminal residue from a tripeptide.. It functions in the pathway lipid metabolism; leukotriene B4 biosynthesis. With respect to regulation, inhibited by bestatin. The epoxide hydrolase activity is restrained by suicide inactivation that involves binding of LTA4 to Tyr-379. 4-(4-benzylphenyl)thiazol-2-amine (ARM1) selectively inhibits the epoxide hydrolase activity. Its function is as follows. Bifunctional zinc metalloenzyme that comprises both epoxide hydrolase (EH) and aminopeptidase activities. Acts as an epoxide hydrolase to catalyze the conversion of LTA4 to the pro-inflammatory mediator leukotriene B4 (LTB4). Also has aminopeptidase activity, with high affinity for N-terminal arginines of various synthetic tripeptides. In addition to its pro-inflammatory EH activity, may also counteract inflammation by its aminopeptidase activity, which inactivates by cleavage another neutrophil attractant, the tripeptide Pro-Gly-Pro (PGP), a bioactive fragment of collagen generated by the action of matrix metalloproteinase-9 (MMP9) and prolylendopeptidase (PREPL). Involved also in the biosynthesis of resolvin E1 and 18S-resolvin E1 from eicosapentaenoic acid, two lipid mediators that show potent anti-inflammatory and pro-resolving actions. The sequence is that of Leukotriene A-4 hydrolase (LTA4H) from Bos taurus (Bovine).